A 388-amino-acid chain; its full sequence is Dual specificity mitogen-activated protein kinase kinase 1 (388 aa).

The interval P1–E20 is disordered. Residues F61–I356 form the Protein kinase domain. ATP contacts are provided by residues L67–V75 and K90. D183 acts as the Proton acceptor in catalysis. S211 and S215 each carry phosphoserine; by RAF. Residues D275 to S299 form a disordered region.

Belongs to the protein kinase superfamily. STE Ser/Thr protein kinase family. MAP kinase kinase subfamily. MAPKK is itself dependent on Ser/Thr phosphorylation for activity catalyzed by MAP kinase kinase kinases (RAF or MEKK1).

Its subcellular location is the cytoplasm. It is found in the cytoskeleton. It localises to the microtubule organizing center. The protein localises to the centrosome. The protein resides in the spindle pole body. Its subcellular location is the nucleus. The catalysed reaction is L-seryl-[protein] + ATP = O-phospho-L-seryl-[protein] + ADP + H(+). The enzyme catalyses L-threonyl-[protein] + ATP = O-phospho-L-threonyl-[protein] + ADP + H(+). It catalyses the reaction L-tyrosyl-[protein] + ATP = O-phospho-L-tyrosyl-[protein] + ADP + H(+). Dual specificity protein kinase which acts as an essential component of the MAP kinase signal transduction pathway. Binding of extracellular ligands such as growth factors, cytokines and hormones to their cell-surface receptors activates RAS and this initiates RAF1 activation. RAF1 then further activates the dual-specificity protein kinases MAP2K1/MEK1 and MAP2K2/MEK2. Both MAP2K1/MEK1 and MAP2K2/MEK2 function specifically in the MAPK/ERK cascade, and catalyze the concomitant phosphorylation of a threonine and a tyrosine residue in a Thr-Glu-Tyr sequence located in the extracellular signal-regulated kinases MAPK3/ERK1 and MAPK1/ERK2, leading to their activation and further transduction of the signal within the MAPK/ERK cascade. Depending on the cellular context, this pathway mediates diverse biological functions such as cell growth, adhesion, survival and differentiation predominantly through the regulation of transcription, metabolism and cytoskeletal rearrangements. The sequence is that of Dual specificity mitogen-activated protein kinase kinase 1 (MAP2K1) from Serinus canaria (Island canary).